The following is a 962-amino-acid chain: Atromentin synthetase nps3 (962 aa).

Residues 55–469 (FISSSAHDSS…SGRIKDTVIV (415 aa)) form an adenylation (A) domain region. The 79-residue stretch at 601-679 (VPATITETAF…DLAKYIDALV (79 aa)) folds into the Carrier domain. The segment at 606-676 (TETAFAKIFA…VLRDLAKYID (71 aa)) is thiolation and peptide carrier (T) domain. The residue at position 638 (S638) is an O-(pantetheine 4'-phosphoryl)serine. The thioesterase (TE) domain stretch occupies residues 702–805 (PIFFVHPGVG…VGLINIPPHI (104 aa)).

It belongs to the ATP-dependent AMP-binding enzyme family.

It functions in the pathway secondary metabolite biosynthesis. An L-tyrosine:2-oxoglutarate aminotransferase (probably amt1) and atromentin synthetase nps3 catalyze consecutive steps to turn over L-tyrosine into atromentin, which represents the generic precursor molecule for the entire terphenylquinone and pulvinic acid family of pigments, which are widely distributed secondary metabolites in homobasidiomycetes. The first step catalyzed by the aminotransferase converts L-tyrosine in to 4-hydroxyphenylpyruvate (4-HPP). Adenylation of two 4-HPP monomers by the nps3 adenylation (A) domain, covalent tethering of the monomers as a thioester and oxoester onto the nps3 thiolation (T) and thioesterase (TE) domains, respectively, and symmetric C-C-bond formation between two monomers catalyzed by the nps3 TE domain leads to atromentin. Follow-up products of atromentin in S.lacrymans include atromentic acid, xerocomic acid, isoxerocomic acid and variegatic acid. The sequence is that of Atromentin synthetase nps3 (nps3) from Serpula lacrymans var. lacrymans (strain S7.9) (Dry rot fungus).